The chain runs to 782 residues: E3 ubiquitin-protein ligase SopA (782 aa).

The disordered stretch occupies residues 136-171; it reads GVSVSANNRPTVSEGRTPPVSPSLSLQATSSPSSPA. The span at 157–171 shows a compositional bias: low complexity; sequence PSLSLQATSSPSSPA. Cysteine 753 functions as the Glycyl thioester intermediate in the catalytic mechanism.

Belongs to the SopA E3 ligase family. Post-translationally, ubiquitinated in the presence of host E1 ubiquitin-activating enzyme, E2 ubiquitin-conjugating enzyme and ubiquitin.

The protein resides in the secreted. The protein localises to the host cell. It catalyses the reaction S-ubiquitinyl-[E2 ubiquitin-conjugating enzyme]-L-cysteine + [acceptor protein]-L-lysine = [E2 ubiquitin-conjugating enzyme]-L-cysteine + N(6)-ubiquitinyl-[acceptor protein]-L-lysine.. Functionally, effector proteins function to alter host cell physiology and promote bacterial survival in host tissues. This protein is an E3 ubiquitin ligase that interferes with host's ubiquitination pathway. For instance, prevents host innate immune response by ubiquitinating and thus sending to degradation host E3 ubiquitin ligases TRIM56 and TRIM65. This Salmonella typhimurium (strain D23580) protein is E3 ubiquitin-protein ligase SopA (sopA).